The primary structure comprises 336 residues: UDP-3-O-acylglucosamine N-acyltransferase (336 aa).

The Proton acceptor role is filled by histidine 233.

It belongs to the transferase hexapeptide repeat family. LpxD subfamily. As to quaternary structure, homotrimer.

The catalysed reaction is a UDP-3-O-[(3R)-3-hydroxyacyl]-alpha-D-glucosamine + a (3R)-hydroxyacyl-[ACP] = a UDP-2-N,3-O-bis[(3R)-3-hydroxyacyl]-alpha-D-glucosamine + holo-[ACP] + H(+). The protein operates within bacterial outer membrane biogenesis; LPS lipid A biosynthesis. Catalyzes the N-acylation of UDP-3-O-acylglucosamine using 3-hydroxyacyl-ACP as the acyl donor. Is involved in the biosynthesis of lipid A, a phosphorylated glycolipid that anchors the lipopolysaccharide to the outer membrane of the cell. The sequence is that of UDP-3-O-acylglucosamine N-acyltransferase from Helicobacter pylori (strain ATCC 700392 / 26695) (Campylobacter pylori).